Reading from the N-terminus, the 530-residue chain is Type II methyltransferase M.MjaII (530 aa).

The protein belongs to the N(4)/N(6)-methyltransferase family. N(4) subfamily.

The catalysed reaction is a 2'-deoxycytidine in DNA + S-adenosyl-L-methionine = an N(4)-methyl-2'-deoxycytidine in DNA + S-adenosyl-L-homocysteine + H(+). In terms of biological role, an alpha subtype methylase that recognizes the double-stranded sequence 5'-GGNCC-3', methylates C-5 on both strands, and protects the DNA from cleavage by the MjaII endonuclease. The protein is Type II methyltransferase M.MjaII (mjaIIM) of Methanocaldococcus jannaschii (strain ATCC 43067 / DSM 2661 / JAL-1 / JCM 10045 / NBRC 100440) (Methanococcus jannaschii).